The sequence spans 123 residues: Large ribosomal subunit protein bL12 (123 aa).

The protein belongs to the bacterial ribosomal protein bL12 family. In terms of assembly, homodimer. Part of the ribosomal stalk of the 50S ribosomal subunit. Forms a multimeric L10(L12)X complex, where L10 forms an elongated spine to which 2 to 4 L12 dimers bind in a sequential fashion. Binds GTP-bound translation factors.

Functionally, forms part of the ribosomal stalk which helps the ribosome interact with GTP-bound translation factors. Is thus essential for accurate translation. This chain is Large ribosomal subunit protein bL12, found in Cytophaga hutchinsonii (strain ATCC 33406 / DSM 1761 / CIP 103989 / NBRC 15051 / NCIMB 9469 / D465).